The chain runs to 378 residues: Ubiquitin-conjugating enzyme E2 Q2 (378 aa).

Positions 126–152 (DQPLPTGQNGTTEEVTSEEEEEEEMAE) are disordered. A compositionally biased stretch (acidic residues) spans 140-152 (VTSEEEEEEEMAE). Residues 207–371 (QASDRLMKEL…VQIHEKNGWY (165 aa)) enclose the UBC core domain. The active-site Glycyl thioester intermediate is C307.

This sequence belongs to the ubiquitin-conjugating enzyme family. Auto-ubiquitinated in vitro.

It localises to the cytoplasm. It carries out the reaction S-ubiquitinyl-[E1 ubiquitin-activating enzyme]-L-cysteine + [E2 ubiquitin-conjugating enzyme]-L-cysteine = [E1 ubiquitin-activating enzyme]-L-cysteine + S-ubiquitinyl-[E2 ubiquitin-conjugating enzyme]-L-cysteine.. It functions in the pathway protein modification; protein ubiquitination. Functionally, accepts ubiquitin from the E1 complex and catalyzes its covalent attachment to other proteins. In vitro catalyzes 'Lys-48'-linked polyubiquitination. This Mus musculus (Mouse) protein is Ubiquitin-conjugating enzyme E2 Q2 (Ube2q2).